A 193-amino-acid polypeptide reads, in one-letter code: Acyl carrier protein phosphodiesterase (193 aa).

It belongs to the AcpH family.

It carries out the reaction holo-[ACP] + H2O = apo-[ACP] + (R)-4'-phosphopantetheine + H(+). In terms of biological role, converts holo-ACP to apo-ACP by hydrolytic cleavage of the phosphopantetheine prosthetic group from ACP. The chain is Acyl carrier protein phosphodiesterase from Salmonella newport (strain SL254).